The chain runs to 334 residues: 4-hydroxy-3-methylbut-2-enyl diphosphate reductase (334 aa).

Residue cysteine 19 coordinates [4Fe-4S] cluster. Residues histidine 48 and histidine 84 each contribute to the (2E)-4-hydroxy-3-methylbut-2-enyl diphosphate site. Histidine 48 and histidine 84 together coordinate dimethylallyl diphosphate. The isopentenyl diphosphate site is built by histidine 48 and histidine 84. [4Fe-4S] cluster is bound at residue cysteine 106. A (2E)-4-hydroxy-3-methylbut-2-enyl diphosphate-binding site is contributed by histidine 134. Histidine 134 contributes to the dimethylallyl diphosphate binding site. Residue histidine 134 participates in isopentenyl diphosphate binding. The Proton donor role is filled by glutamate 136. (2E)-4-hydroxy-3-methylbut-2-enyl diphosphate is bound at residue threonine 175. Cysteine 205 contributes to the [4Fe-4S] cluster binding site. (2E)-4-hydroxy-3-methylbut-2-enyl diphosphate is bound by residues serine 233, serine 234, asparagine 235, and serine 278. Residues serine 233, serine 234, asparagine 235, and serine 278 each coordinate dimethylallyl diphosphate. Positions 233, 234, 235, and 278 each coordinate isopentenyl diphosphate.

It belongs to the IspH family. [4Fe-4S] cluster serves as cofactor.

It carries out the reaction isopentenyl diphosphate + 2 oxidized [2Fe-2S]-[ferredoxin] + H2O = (2E)-4-hydroxy-3-methylbut-2-enyl diphosphate + 2 reduced [2Fe-2S]-[ferredoxin] + 2 H(+). The enzyme catalyses dimethylallyl diphosphate + 2 oxidized [2Fe-2S]-[ferredoxin] + H2O = (2E)-4-hydroxy-3-methylbut-2-enyl diphosphate + 2 reduced [2Fe-2S]-[ferredoxin] + 2 H(+). It functions in the pathway isoprenoid biosynthesis; dimethylallyl diphosphate biosynthesis; dimethylallyl diphosphate from (2E)-4-hydroxy-3-methylbutenyl diphosphate: step 1/1. It participates in isoprenoid biosynthesis; isopentenyl diphosphate biosynthesis via DXP pathway; isopentenyl diphosphate from 1-deoxy-D-xylulose 5-phosphate: step 6/6. Its function is as follows. Catalyzes the conversion of 1-hydroxy-2-methyl-2-(E)-butenyl 4-diphosphate (HMBPP) into a mixture of isopentenyl diphosphate (IPP) and dimethylallyl diphosphate (DMAPP). Acts in the terminal step of the DOXP/MEP pathway for isoprenoid precursor biosynthesis. This chain is 4-hydroxy-3-methylbut-2-enyl diphosphate reductase, found in Chelativorans sp. (strain BNC1).